The sequence spans 361 residues: [LysW]-lysine hydrolase (361 aa).

Position 67 (histidine 67) interacts with Zn(2+). Aspartate 69 is an active-site residue. Aspartate 91 contributes to the Zn(2+) binding site. Residue glutamate 124 is the Proton acceptor of the active site. Zn(2+) is bound by residues glutamate 125, glutamate 148, and histidine 326.

Belongs to the peptidase M20A family. LysK subfamily. Zn(2+) serves as cofactor. Co(2+) is required as a cofactor.

It localises to the cytoplasm. It carries out the reaction [amino-group carrier protein]-C-terminal-gamma-(L-lysyl)-L-glutamate + H2O = [amino-group carrier protein]-C-terminal-L-glutamate + L-lysine. It functions in the pathway amino-acid biosynthesis; L-lysine biosynthesis via AAA pathway; L-lysine from L-alpha-aminoadipate (Thermus route): step 5/5. Its function is as follows. Catalyzes the release of L-lysine from [LysW]-gamma-L-lysine. The polypeptide is [LysW]-lysine hydrolase (Thermus thermophilus (strain ATCC 27634 / DSM 579 / HB8)).